Consider the following 83-residue polypeptide: MRLFLSLPVLVVVLSIVLEGPAPAQGTPDVSSALDKLKEFGNTLEDKARELISRIKQSELSAKMREWFSETFQKVKEKLKIDS.

The signal sequence occupies residues 1–26 (MRLFLSLPVLVVVLSIVLEGPAPAQG).

Belongs to the apolipoprotein C1 family. In terms of tissue distribution, synthesized mainly in liver and to a minor degree in intestine. Also found in the lung and spleen.

The protein resides in the secreted. Inhibitor of lipoprotein binding to the low density lipoprotein (LDL) receptor, LDL receptor-related protein, and very low density lipoprotein (VLDL) receptor. Associates with high density lipoproteins (HDL) and the triacylglycerol-rich lipoproteins in the plasma and makes up about 10% of the protein of the VLDL and 2% of that of HDL. Appears to interfere directly with fatty acid uptake and is also the major plasma inhibitor of cholesteryl ester transfer protein (CETP). Binds free fatty acids and reduces their intracellular esterification. Modulates the interaction of APOE with beta-migrating VLDL and inhibits binding of beta-VLDL to the LDL receptor-related protein. The protein is Apolipoprotein C-I (APOC1) of Homo sapiens (Human).